Consider the following 172-residue polypeptide: 3-phenylpropionate/cinnamic acid dioxygenase subunit beta (172 aa).

This sequence belongs to the bacterial ring-hydroxylating dioxygenase beta subunit family. This dioxygenase system consists of four proteins: the two subunits of the hydroxylase component (HcaE and HcaF), a ferredoxin (HcaC) and a ferredoxin reductase (HcaD).

The catalysed reaction is 3-phenylpropanoate + NADH + O2 + H(+) = 3-(cis-5,6-dihydroxycyclohexa-1,3-dien-1-yl)propanoate + NAD(+). It carries out the reaction (E)-cinnamate + NADH + O2 + H(+) = (2E)-3-(cis-5,6-dihydroxycyclohexa-1,3-dien-1-yl)prop-2-enoate + NAD(+). Its pathway is aromatic compound metabolism; 3-phenylpropanoate degradation. Its function is as follows. Part of the multicomponent 3-phenylpropionate dioxygenase. Converts 3-phenylpropionic acid (PP) and cinnamic acid (CI) into 3-phenylpropionate-dihydrodiol (PP-dihydrodiol) and cinnamic acid-dihydrodiol (CI-dihydrodiol), respectively. This is 3-phenylpropionate/cinnamic acid dioxygenase subunit beta from Shigella flexneri serotype 5b (strain 8401).